Reading from the N-terminus, the 295-residue chain is MEKKVGTDRVKRGMAQMQKGGVIMDVVNAEQAKIAEEAGAVAVMALERVPSDIRAAGGVARMADPRIVEEVMNAVSIPVMAKARIGHITEARVLEAMGVDYIDESEVLTPADDEFHLLKSDFTVPFVCGCRDIGEALRRIGEGAAMLRTKGEPGTGNIVEAVRHMRQVNGQIRQIASMTDDELMVAAKNFGAPYELVKEIKTLGKLPVVNFAAGGVATPADAALMMELGADGVFVGSGIFKSDNPAKFASAIVQATTYYTDYELIGKLSKELGSPMKGIEMSRLNPEDRMQDRSF.

Asp-25 serves as a coordination point for D-ribose 5-phosphate. Catalysis depends on Lys-82, which acts as the Schiff-base intermediate with D-ribose 5-phosphate. D-ribose 5-phosphate is bound at residue Gly-154. Arg-166 contributes to the D-glyceraldehyde 3-phosphate binding site. D-ribose 5-phosphate-binding positions include Gly-215 and 236–237 (GS).

This sequence belongs to the PdxS/SNZ family. In the presence of PdxT, forms a dodecamer of heterodimers.

The enzyme catalyses aldehydo-D-ribose 5-phosphate + D-glyceraldehyde 3-phosphate + L-glutamine = pyridoxal 5'-phosphate + L-glutamate + phosphate + 3 H2O + H(+). It functions in the pathway cofactor biosynthesis; pyridoxal 5'-phosphate biosynthesis. Functionally, catalyzes the formation of pyridoxal 5'-phosphate from ribose 5-phosphate (RBP), glyceraldehyde 3-phosphate (G3P) and ammonia. The ammonia is provided by the PdxT subunit. Can also use ribulose 5-phosphate and dihydroxyacetone phosphate as substrates, resulting from enzyme-catalyzed isomerization of RBP and G3P, respectively. In Listeria innocua serovar 6a (strain ATCC BAA-680 / CLIP 11262), this protein is Pyridoxal 5'-phosphate synthase subunit PdxS.